Reading from the N-terminus, the 170-residue chain is Ribosome maturation factor RimP (170 aa).

This sequence belongs to the RimP family.

The protein localises to the cytoplasm. In terms of biological role, required for maturation of 30S ribosomal subunits. This Acidothermus cellulolyticus (strain ATCC 43068 / DSM 8971 / 11B) protein is Ribosome maturation factor RimP.